Here is a 190-residue protein sequence, read N- to C-terminus: UPF0301 protein PSPPH_0476 (190 aa).

The protein belongs to the UPF0301 (AlgH) family.

The protein is UPF0301 protein PSPPH_0476 of Pseudomonas savastanoi pv. phaseolicola (strain 1448A / Race 6) (Pseudomonas syringae pv. phaseolicola (strain 1448A / Race 6)).